Here is a 187-residue protein sequence, read N- to C-terminus: Elongation factor P (187 aa).

Belongs to the elongation factor P family.

The protein resides in the cytoplasm. The protein operates within protein biosynthesis; polypeptide chain elongation. In terms of biological role, involved in peptide bond synthesis. Stimulates efficient translation and peptide-bond synthesis on native or reconstituted 70S ribosomes in vitro. Probably functions indirectly by altering the affinity of the ribosome for aminoacyl-tRNA, thus increasing their reactivity as acceptors for peptidyl transferase. This chain is Elongation factor P, found in Corynebacterium efficiens (strain DSM 44549 / YS-314 / AJ 12310 / JCM 11189 / NBRC 100395).